The primary structure comprises 669 residues: DNA ligase (669 aa).

Residues 34–38 (DAEYD), 83–84 (SL), and glutamate 114 contribute to the NAD(+) site. Lysine 116 serves as the catalytic N6-AMP-lysine intermediate. NAD(+)-binding residues include arginine 137, glutamate 171, lysine 287, and lysine 311. Zn(2+) contacts are provided by cysteine 405, cysteine 408, cysteine 423, and cysteine 428. One can recognise a BRCT domain in the interval 591-669 (NVESYFAGKT…EERFLQELNK (79 aa)).

This sequence belongs to the NAD-dependent DNA ligase family. LigA subfamily. Requires Mg(2+) as cofactor. Mn(2+) is required as a cofactor.

It catalyses the reaction NAD(+) + (deoxyribonucleotide)n-3'-hydroxyl + 5'-phospho-(deoxyribonucleotide)m = (deoxyribonucleotide)n+m + AMP + beta-nicotinamide D-nucleotide.. Functionally, DNA ligase that catalyzes the formation of phosphodiester linkages between 5'-phosphoryl and 3'-hydroxyl groups in double-stranded DNA using NAD as a coenzyme and as the energy source for the reaction. It is essential for DNA replication and repair of damaged DNA. This chain is DNA ligase, found in Bacillus cereus (strain G9842).